The chain runs to 482 residues: MEREIPPELGLHAGLHVNAAVEGMAEEEGLHLLAGAAFDHAAAADVARGEGGGAEPCGGGEVNMEQQVQEGHVLDSGEGPSCADDRDKQEKKESLKEAAVLSRLTVNLMSRPRLETVYWQELQDEFQRGDMHLQYKYSFEQLKTHWLEPWEDMECAIKAFAKLALRPDCSYRITKTVTITSCAYIIGNGAIVEVDTSDRVAFRCRMQGMGPGVVGLDGITFINVRFAGDKFKGIMFEANTCLVLHGVYFLNFSNICVESWNKVSARGCTFYGCWKGLVGRPKSKLSVKKCLFEKCVLALIVEGDAHIRHNAASENACFVLLKGMAILKHNMVCGVSDQTMRRFVTCADGNCHTLKTVHIVSHSRHCWPVCDHNMFMRCTIHLGLRRGMFRPSQCNFSHSNIMLEPEVFSRVCLNGVFDLSVELCKVIRYNDDTRHRCRQCECGSSHLELRPIVLNVTEELRSDHLTLSCLRTDYESSDEDDN.

Residues 73–94 (VLDSGEGPSCADDRDKQEKKES) are disordered. Residues 83–94 (ADDRDKQEKKES) show a composition bias toward basic and acidic residues. 2 positions are modified to phosphoserine: serine 476 and serine 477.

Belongs to the adenoviridae E1B 55 kDa protein family. Interacts with host PML-4 and PML-5; this interaction promotes efficient subnuclear targeting of E1B-55K to PML nuclear bodies. Interacts with E4-ORF3 protein. Interacts with E4-ORF6 protein.

Its subcellular location is the host nucleus. It is found in the host cytoplasm. Plays a major role to prevent cellular inhibition of viral genome replication. Assembles an SCF-like E3 ubiquitin ligase complex based on the cellular proteins ELOB, ELOC, CUL5 and RBX1, in cooperation with viral E4orf6. This viral RING-type ligase ubiquitinates cellular substrates and targets them to proteasomal degradation: TP53/p53, LIG4, MRE11-RAD50-NBS1 (MRN) complex, ITGA3, DAXX and BLM. E1B-55K probably acts as the substrate-specific adapter of the SCF-like E3 ubiquitin ligase complex. Degradation of host TP53/p53 activity is essential for preventing E1A-induced TP53 accumulation that would otherwise lead to cell apoptosis and growth arrest. E1B-55K also inactivates TP53 transcription-factor activity by binding its transactivation domain. E1B-55K also functions as a SUMO1 E3 ligase for TP53 which causes the latter to be sequestered in promyelocytic leukemia (PML) nuclear bodies thereby contributing to maximal inhibition of TP53 function. The protein is E1B 55 kDa protein of Homo sapiens (Human).